The chain runs to 98 residues: NADH-ubiquinone oxidoreductase chain 4L (98 aa).

3 helical membrane passes run M1 to M21, L31 to I51, and I61 to V81.

It belongs to the complex I subunit 4L family. In terms of assembly, core subunit of respiratory chain NADH dehydrogenase (Complex I) which is composed of 45 different subunits.

The protein resides in the mitochondrion inner membrane. The enzyme catalyses a ubiquinone + NADH + 5 H(+)(in) = a ubiquinol + NAD(+) + 4 H(+)(out). Core subunit of the mitochondrial membrane respiratory chain NADH dehydrogenase (Complex I) which catalyzes electron transfer from NADH through the respiratory chain, using ubiquinone as an electron acceptor. Part of the enzyme membrane arm which is embedded in the lipid bilayer and involved in proton translocation. The polypeptide is NADH-ubiquinone oxidoreductase chain 4L (MT-ND4L) (Chalinolobus tuberculatus (New Zealand long-tailed bat)).